A 473-amino-acid chain; its full sequence is MSFDLSFPKSFLWGGATAANQFEGAYNEDGKGLSIQDIAPKGVMGPITEVPTEDNMKLIGIDFYHRYKEDIKLFAEMGFKTFRLSIAWSRIFPNGDDEIPNEKGLEFYDKVFDELQRYGIEPLVTLSHYETPLNLSKKYNGWANRDLIGFYERYVRTVFTRYKDKVKYWLTFNEINSAIHAPYMSAGIWTDKSELSKQDLYQAMHHELVASALAVKIGHEINPDFKIGCMILGIPVYPLTPHPDDLIEKMRVERESLFFADVHARGKYPRYMNRLFKENNIEIKWHEDDAEILSNVVDFISFSYYMSSCATADEEKKKAGAGNLLAGVPNPYLKASEWGWQIDPKGLRLILNELYDRYEKPLFIVENGLGAVDELVTDENGNKTVNDDYRIKYLNDHLVQVAEAIEDGVELMGYTTWGCIDLVSASTAELKKRYGFIYVDRHDDGSGTLERYKKKSFNWYKEVIATNGKSLER.

E174 serves as the catalytic Proton donor. E366 functions as the Nucleophile in the catalytic mechanism.

Belongs to the glycosyl hydrolase 1 family.

The catalysed reaction is 6-phospho-beta-D-glucosyl-(1-&gt;4)-D-glucose + H2O = D-glucose 6-phosphate + D-glucose. This is 6-phospho-beta-glucosidase (abgA) from Clostridium longisporum.